A 181-amino-acid polypeptide reads, in one-letter code: Early E3 20.3 kDa glycoprotein (181 aa).

Asn-29, Asn-57, Asn-70, and Asn-75 each carry an N-linked (GlcNAc...) asparagine; by host glycan.

It belongs to the adenoviridae E3_20 family.

Its function is as follows. E3 proteins seem to be dispensable for virus growth in tissue culture cells. They are potentially important for virus growth under special conditions; E3 region may help adenoviruses to evade the immune surveillance of the host. This is Early E3 20.3 kDa glycoprotein from Human adenovirus B serotype 11 (strain Slobiski) (HAdV-11).